A 416-amino-acid polypeptide reads, in one-letter code: Cysteate synthase (416 aa).

Lys104 carries the post-translational modification N6-(pyridoxal phosphate)lysine. Asn130 serves as a coordination point for pyridoxal 5'-phosphate.

The protein belongs to the threonine synthase family. Cysteate synthase subfamily. In terms of assembly, homotrimer. Pyridoxal 5'-phosphate serves as cofactor.

It carries out the reaction O-phospho-L-serine + sulfite + H(+) = L-cysteate + phosphate. The protein operates within cofactor biosynthesis; coenzyme M biosynthesis. Specifically catalyzes the beta-elimination of phosphate from L-phosphoserine and the beta-addition of sulfite to the dehydroalanine intermediate to produce L-cysteate. This is Cysteate synthase from Methanosarcina barkeri (strain Fusaro / DSM 804).